Here is a 348-residue protein sequence, read N- to C-terminus: Mamu class I histocompatibility antigen, alpha chain F (348 aa).

An N-terminal signal peptide occupies residues 1 to 21; it reads MAPRTLLLVLSGALALTETWA. An alpha-1 region spans residues 22 to 113; that stretch reads GSHSLRYFST…LLLRYNQSEA (92 aa). The Extracellular segment spans residues 22 to 307; that stretch reads GSHSLRYFST…ESSSQPTIPI (286 aa). A glycan (N-linked (GlcNAc...) asparagine) is linked at N109. Residues 114–205 are alpha-2; it reads GSHTLQGMNG…ENGKETLQRA (92 aa). Intrachain disulfides connect C124–C187 and C226–C282. Positions 206–297 are alpha-3; it reads DPPKAHVAHH…GLPQPLTLRW (92 aa). Residues 208-296 enclose the Ig-like C1-type domain; it reads PKAHVAHHPI…EGLPQPLTLR (89 aa). Residues 298–307 form a connecting peptide region; that stretch reads ESSSQPTIPI. The helical transmembrane segment at 308–331 threads the bilayer; that stretch reads VGIVAGLAVLAVVVTGAVVAAVMW. The Cytoplasmic segment spans residues 332–348; sequence RRKSSDRNRGSYSQPTM.

The protein belongs to the MHC class I family. As to quaternary structure, heterodimer of an alpha chain and a beta chain (beta-2-microglobulin).

The protein resides in the membrane. In terms of biological role, involved in the presentation of foreign antigens to the immune system. The chain is Mamu class I histocompatibility antigen, alpha chain F (Mamu-F) from Macaca mulatta (Rhesus macaque).